The following is a 227-amino-acid chain: Phosphoribosylformylglycinamidine synthase subunit PurQ (227 aa).

Positions 3 to 225 (FAVIVFPGSN…LKQWRETYVV (223 aa)) constitute a Glutamine amidotransferase type-1 domain. The active-site Nucleophile is cysteine 86. Residues histidine 194 and glutamate 196 contribute to the active site.

In terms of assembly, part of the FGAM synthase complex composed of 1 PurL, 1 PurQ and 2 PurS subunits.

The protein localises to the cytoplasm. The enzyme catalyses N(2)-formyl-N(1)-(5-phospho-beta-D-ribosyl)glycinamide + L-glutamine + ATP + H2O = 2-formamido-N(1)-(5-O-phospho-beta-D-ribosyl)acetamidine + L-glutamate + ADP + phosphate + H(+). It catalyses the reaction L-glutamine + H2O = L-glutamate + NH4(+). It participates in purine metabolism; IMP biosynthesis via de novo pathway; 5-amino-1-(5-phospho-D-ribosyl)imidazole from N(2)-formyl-N(1)-(5-phospho-D-ribosyl)glycinamide: step 1/2. Part of the phosphoribosylformylglycinamidine synthase complex involved in the purines biosynthetic pathway. Catalyzes the ATP-dependent conversion of formylglycinamide ribonucleotide (FGAR) and glutamine to yield formylglycinamidine ribonucleotide (FGAM) and glutamate. The FGAM synthase complex is composed of three subunits. PurQ produces an ammonia molecule by converting glutamine to glutamate. PurL transfers the ammonia molecule to FGAR to form FGAM in an ATP-dependent manner. PurS interacts with PurQ and PurL and is thought to assist in the transfer of the ammonia molecule from PurQ to PurL. In Bacillus thuringiensis (strain Al Hakam), this protein is Phosphoribosylformylglycinamidine synthase subunit PurQ.